We begin with the raw amino-acid sequence, 296 residues long: Ribosomal RNA small subunit methyltransferase A (296 aa).

6 residues coordinate S-adenosyl-L-methionine: N30, L32, G57, E78, D103, and N128.

It belongs to the class I-like SAM-binding methyltransferase superfamily. rRNA adenine N(6)-methyltransferase family. RsmA subfamily.

The protein localises to the cytoplasm. It carries out the reaction adenosine(1518)/adenosine(1519) in 16S rRNA + 4 S-adenosyl-L-methionine = N(6)-dimethyladenosine(1518)/N(6)-dimethyladenosine(1519) in 16S rRNA + 4 S-adenosyl-L-homocysteine + 4 H(+). Functionally, specifically dimethylates two adjacent adenosines (A1518 and A1519) in the loop of a conserved hairpin near the 3'-end of 16S rRNA in the 30S particle. May play a critical role in biogenesis of 30S subunits. The chain is Ribosomal RNA small subunit methyltransferase A from Macrococcus caseolyticus (strain JCSC5402) (Macrococcoides caseolyticum).